The following is a 275-amino-acid chain: Beta-lactamase OXA-3 (275 aa).

Positions 1 to 21 (MAIRIFAILFSTFVFGTFAHA) are cleaved as a signal peptide. Ser-72 functions as the Acyl-ester intermediate in the catalytic mechanism. Lys-75 is modified (N6-carboxylysine). A substrate-binding site is contributed by 210 to 212 (KTG).

The protein belongs to the class-D beta-lactamase family.

The enzyme catalyses a beta-lactam + H2O = a substituted beta-amino acid. In terms of biological role, this is an oxacillin-hydrolyzing beta-lactamase. The chain is Beta-lactamase OXA-3 (bla) from Pseudomonas aeruginosa.